The following is a 157-amino-acid chain: Endoribonuclease YbeY (157 aa).

Residues H116, H120, and H126 each coordinate Zn(2+).

Belongs to the endoribonuclease YbeY family. The cofactor is Zn(2+).

The protein localises to the cytoplasm. In terms of biological role, single strand-specific metallo-endoribonuclease involved in late-stage 70S ribosome quality control and in maturation of the 3' terminus of the 16S rRNA. The protein is Endoribonuclease YbeY of Renibacterium salmoninarum (strain ATCC 33209 / DSM 20767 / JCM 11484 / NBRC 15589 / NCIMB 2235).